We begin with the raw amino-acid sequence, 191 residues long: Adenylate kinase (191 aa).

11 to 16 (GSGKGT) is an ATP binding site. The NMP stretch occupies residues 31 to 60 (STGEILRREIKDKTELGKIAEEYINQGQLL). AMP is bound by residues Thr32, Arg37, 58–60 (QLL), 86–89 (GFPR), and Gln93. Residues 127 to 137 (KRGKLFSRKDD) form an LID region. Arg128 provides a ligand contact to ATP. Positions 134 and 145 each coordinate AMP. Asn173 is an ATP binding site.

Belongs to the adenylate kinase family. Monomer.

The protein localises to the cytoplasm. It carries out the reaction AMP + ATP = 2 ADP. It participates in purine metabolism; AMP biosynthesis via salvage pathway; AMP from ADP: step 1/1. In terms of biological role, catalyzes the reversible transfer of the terminal phosphate group between ATP and AMP. Plays an important role in cellular energy homeostasis and in adenine nucleotide metabolism. The chain is Adenylate kinase from Azobacteroides pseudotrichonymphae genomovar. CFP2.